A 104-amino-acid chain; its full sequence is Large ribosomal subunit protein eL30 (104 aa).

Belongs to the eukaryotic ribosomal protein eL30 family.

The protein is Large ribosomal subunit protein eL30 (RPL30) of Leishmania major.